The following is a 140-amino-acid chain: L-fucose mutarotase (140 aa).

H22 (proton donor) is an active-site residue. Substrate contacts are provided by residues D30, R107, and Y129–N131.

It belongs to the RbsD / FucU family. FucU mutarotase subfamily. As to quaternary structure, homodecamer.

Its subcellular location is the cytoplasm. It carries out the reaction alpha-L-fucose = beta-L-fucose. It functions in the pathway carbohydrate metabolism; L-fucose metabolism. Involved in the anomeric conversion of L-fucose. In Salmonella gallinarum (strain 287/91 / NCTC 13346), this protein is L-fucose mutarotase.